Here is a 2411-residue protein sequence, read N- to C-terminus: Polyprotein P1234 (2411 aa).

Residues glutamate 30 to histidine 257 form the Alphavirus-like MT domain. The interval glycine 242 to threonine 261 is nsP1 membrane-binding. Residues cysteine 415 and cysteine 417 are each lipidated (S-palmitoyl cysteine; by host). In terms of domain architecture, (+)RNA virus helicase ATP-binding spans glutamate 688–lysine 840. An a ribonucleoside 5'-triphosphate-binding site is contributed by glycine 719 to serine 726. The 149-residue stretch at serine 841–glycine 989 folds into the (+)RNA virus helicase C-terminal domain. Positions asparagine 1002 to threonine 1325 constitute a Peptidase C9 domain. The nucleolus localization signal stretch occupies residues threonine 1003–threonine 1022. Cysteine 1011 (for cysteine protease nsP2 activity) is an active-site residue. The Nuclear export signal motif lies at threonine 1056–threonine 1065. The active-site For cysteine protease nsP2 activity is histidine 1081. The short motif at proline 1180–isoleucine 1184 is the Nuclear localization signal element. The region spanning alanine 1332 to threonine 1491 is the Macro domain. Aspartate 1341, asparagine 1355, glycine 1363, glycine 1443, isoleucine 1444, and tyrosine 1445 together coordinate ADP-D-ribose. 4 residues coordinate Zn(2+): cysteine 1593, cysteine 1595, cysteine 1618, and cysteine 1636. The segment at aspartate 1681–lysine 1720 is disordered. 2 short sequence motifs (FGDF; binding to host G3BP1) span residues phenylalanine 1760–phenylalanine 1763 and phenylalanine 1778–phenylalanine 1781. A RdRp catalytic domain is found at aspartate 2165–alanine 2280.

As to quaternary structure, interacts with non-structural protein 3. Interacts with RNA-directed RNA polymerase nsP4. Interacts with protease nsP2. interacts with itself. Interacts with mRNA-capping enzyme nsP1. Interacts with host DDX1. Interacts with host DDX3. Interacts (via C-terminus) with host G3BP1; this interaction inhibits the formation of host stress granules on viral mRNAs and the nsp3-G3BP1 complexes bind viral RNAs and probably orchestrate the assembly of viral replication complexes. Interacts (via C-terminus) with host G3BP2; this interaction inhibits the formation of host stress granules on viral mRNAs and the nsp3-G3BP2 complexes bind viral RNAs and probably orchestrate the assembly of viral replication complexes. In terms of assembly, interacts with mRNA-capping enzyme nsP1. Interacts with protease nsP2. interacts with itself. As to quaternary structure, interacts with RNA-directed RNA polymerase nsP4. Interacts with mRNA-capping enzyme nsP1. Interacts with KPNA1/karyopherin-alpha1; this interaction probably allows the active transport of protease nsP2 into the host nucleus. It depends on Mg(2+) as a cofactor. Requires Mn(2+) as cofactor. In terms of processing, specific enzymatic cleavages in vivo yield mature proteins. The processing of the polyprotein is temporally regulated. In early stages (1.7 hpi), P1234 is first cleaved in trans through its nsP2 protease activity, releasing P123' and nsP4, which associate to form the early replication complex. At the same time, P1234 is also cut at the nsP1/nsP2 site early in infection but with lower efficiency. After replication of the viral minus-strand RNAs (4 hpi), the polyproteins are cut at the nsP1/nsP2 and nsP2/nsP3 sites very efficiently, preventing accumulation of P123' and P1234 and allowing the formation of the late replication complex. NsP3'/nsP4 site is not cleaved anymore and P34 is produced rather than nsP4. Post-translationally, specific enzymatic cleavages in vivo yield mature proteins. The processing of the polyprotein is temporally regulated. In early stages (1.7 hpi), P123 is cleaved at the nsP1/nsP2 site with low efficiency. After replication of the viral minus-strand RNAs (4 hpi), the polyproteins are cut at the nsP1/nsP2 and nsP2/nsP3 sites very efficiently, preventing accumulation of P123 and allowing the formation of the late replication complex. Specific enzymatic cleavages in vivo yield mature proteins. The processing of the polyprotein is temporally regulated. In early stages (1.7 hpi), P123' is cleaved at the nsP1/nsP2 site with low efficiency. After replication of the viral minus-strand RNAs (4 hpi), the polyproteins are cut at the nsP1/nsP2 and nsP2/nsP3 sites very efficiently, preventing accumulation of P123' and allowing the formation of the late replication complex. In terms of processing, palmitoylated by host palmitoyltransferases ZDHHC2 and ZDHHC19. Post-translationally, phosphorylated by host on serines and threonines. Ubiquitinated; targets the protein for rapid degradation via the ubiquitin system. Nsp4 is present in extremely low quantities due to low frequency of translation through the amber stop-codon and the degradation by the ubiquitin pathway.

It localises to the host cytoplasmic vesicle membrane. Its subcellular location is the host cell membrane. It is found in the host cell projection. The protein localises to the host filopodium. The protein resides in the host nucleus. It localises to the host cytoplasm. It catalyses the reaction GTP + S-adenosyl-L-methionine = N(7)-methyl-GTP + S-adenosyl-L-homocysteine. The catalysed reaction is N(7)-methyl-GTP + L-histidyl-[protein] = N(tele)-(N(7)-methylguanosine 5'-phospho)-L-histidyl-[protein] + diphosphate. It carries out the reaction N(tele)-(N(7)-methylguanosine 5'-phospho)-L-histidyl-[protein] + a 5'-end diphospho-(purine-ribonucleoside) in mRNA + H(+) = a 5'-end (N(7)-methyl 5'-triphosphoguanosine)-(purine-ribonucleoside) in mRNA + L-histidyl-[protein]. The enzyme catalyses a 5'-end triphospho-ribonucleoside in mRNA + H2O = a 5'-end diphospho-ribonucleoside in mRNA + phosphate + H(+). It catalyses the reaction a ribonucleoside 5'-triphosphate + H2O = a ribonucleoside 5'-diphosphate + phosphate + H(+). The catalysed reaction is ATP + H2O = ADP + phosphate + H(+). It carries out the reaction RNA(n) + a ribonucleoside 5'-triphosphate = RNA(n+1) + diphosphate. The enzyme catalyses RNA(n) + ATP = RNA(n)-3'-adenine ribonucleotide + diphosphate. It catalyses the reaction 4-O-(ADP-D-ribosyl)-L-aspartyl-[protein] + H2O = L-aspartyl-[protein] + ADP-D-ribose + H(+). The catalysed reaction is 5-O-(ADP-D-ribosyl)-L-glutamyl-[protein] + H2O = L-glutamyl-[protein] + ADP-D-ribose + H(+). It carries out the reaction ADP-alpha-D-ribose 1''-phosphate + H2O = ADP-D-ribose + phosphate. Its function is as follows. Inactive precursor of the viral replicase, which is activated by cleavages carried out by the viral protease nsP2. The early replication complex formed by the polyprotein P123 and nsP4 synthesizes minus-strand RNAs. As soon P123 is cleaved into mature proteins, the plus-strand RNAs synthesis begins. Functionally, the early replication complex formed by the polyprotein P123' and nsP4 synthesizes minus-strand RNAs. Polyprotein P123' is a short-lived polyprotein that accumulates during early stage of infection. As soon P123' is cleaved into mature proteins, the plus-strand RNAs synthesis begins. In terms of biological role, cytoplasmic capping enzyme that catalyzes two virus-specific reactions: methyltransferase and nsP1 guanylyltransferase. mRNA-capping is necessary since all viral RNAs are synthesized in the cytoplasm, and host capping enzymes are restricted to the nucleus. The enzymatic reaction involves a covalent link between 7-methyl-GMP and nsP1, whereas eukaryotic capping enzymes form a covalent complex only with GMP. nsP1 capping consists in the following reactions: GTP is first methylated into 7-methyl-GMP and then is covalently linked to nsP1 to form the m7GMp-nsP1 complex from which 7-methyl-GMP complex is transferred to the mRNA to create the cap structure. NsP1 is needed for the initiation of the minus-strand RNAs synthesis. Probably serves as a membrane anchor for the replication complex composed of nsP1-nsP4. Palmitoylated nsP1 is remodeling host cell cytoskeleton, and induces filopodium-like structure formation at the surface of the host cell. Its function is as follows. Multifunctional protein whose N-terminus is part of the RNA polymerase complex and displays NTPase, RNA triphosphatase and helicase activities. NTPase and RNA triphosphatase are involved in viral RNA capping and helicase keeps a check on the dsRNA replication intermediates. The C-terminus harbors a protease that specifically cleaves the polyproteins and releases the mature proteins. Required for the shutoff of minus-strand RNAs synthesis. Specifically inhibits the host IFN response by promoting the nuclear export of host STAT1. Also inhibits host transcription by inducing rapid proteasome-dependent degradation of POLR2A, a catalytic subunit of the RNAPII complex. The resulting inhibition of cellular protein synthesis serves to ensure maximal viral gene expression and to evade host immune response. Seems to be essential for minus-strand RNAs and subgenomic 26S mRNAs synthesis. Displays mono-ADP-ribosylhydrolase activity. ADP-ribosylation is a post-translational modification that controls various processes of the host cell and the virus probably needs to revert it for optimal viral replication. Binds proteins of FXR family and sequesters them into the viral RNA replication complexes thereby inhibiting the formation of host stress granules on viral mRNAs. The nsp3-FXR complexes bind viral RNAs and probably orchestrate the assembly of viral replication complexes, thanks to the ability of FXR family members to self-assemble and bind DNA. Functionally, seems to be essential for minus-strand RNAs and subgenomic 26S mRNAs synthesis. Displays mono-ADP-ribosylhydrolase activity. ADP-ribosylation is a post-translantional modification that controls various processes of the host cell and the virus probably needs to revert it for optimal viral replication. Binds proteins of G3BP family and sequesters them into the viral RNA replication complexes thereby inhibiting the formation of host stress granules on viral mRNAs. The nsp3'-G3BP complexes bind viral RNAs and probably orchestrate the assembly of viral replication complexes, thanks to the ability of G3BP family members to self-assemble and bind DNA. In terms of biological role, RNA dependent RNA polymerase. Replicates genomic and antigenomic RNA by recognizing replications specific signals. The early replication complex formed by the polyprotein P123 and nsP4 synthesizes minus-strand RNAs. The late replication complex composed of fully processed nsP1-nsP4 is responsible for the production of genomic and subgenomic plus-strand RNAs. The core catalytic domain of nsP4 also possesses terminal adenylyltransferase (TATase) activity that is probably involved in maintenance and repair of the poly(A) tail, an element required for replication of the viral genome. In Barmah forest virus (BFV), this protein is Polyprotein P1234.